A 111-amino-acid chain; its full sequence is MSAMYAKRCAALVLLVVTVGLVNATENYMDYGEEMAEKTPAENIHELYRLLLQRNTLDNAGFGGIPLEHLMIRKSQRSPSLRLRFGRSGPHVSARALPRPMGAVAGYDDNN.

The N-terminal stretch at 1 to 24 (MSAMYAKRCAALVLLVVTVGLVNA) is a signal peptide. The propeptide occupies 25 to 76 (TENYMDYGEEMAEKTPAENIHELYRLLLQRNTLDNAGFGGIPLEHLMIRKSQ). Residue Phe85 is modified to Phenylalanine amide. A propeptide spanning residues 88–111 (SGPHVSARALPRPMGAVAGYDDNN) is cleaved from the precursor.

Expressed throughout the central nervous system (at protein level).

The protein localises to the secreted. Its function is as follows. Plays a role in controlling food intake and regulating body size. The polypeptide is Short neuropeptide F (Camponotus floridanus (Florida carpenter ant)).